Consider the following 613-residue polypeptide: Serine protease FAM111A (613 aa).

A disordered region spans residues 1–72 (MSCKKRKSQI…TRQDQTPPLN (72 aa)). A Glycyl lysine isopeptide (Lys-Gly) (interchain with G-Cter in SUMO2) cross-link involves residue Lys19. Ser25 is subject to Phosphoserine. A Glycyl lysine isopeptide (Lys-Gly) (interchain with G-Cter in SUMO2) cross-link involves residue Lys29. The segment covering 40–56 (VDSKKMPRDITNTRDQR) has biased composition (basic and acidic residues). Lys62 is covalently cross-linked (Glycyl lysine isopeptide (Lys-Gly) (interchain with G-Cter in SUMO2)). Active-site charge relay system residues include His383, Asp437, and Ser543.

This sequence belongs to the FAM111 family. As to quaternary structure, interacts (via PIP-box) with PCNA; this interaction is direct. Autocatalytically cleaved; autocatalytic cleavage takes place in trans.

It is found in the nucleus. It localises to the chromosome. The protein localises to the cytoplasm. Its function is as follows. Single-stranded DNA-binding serine protease that mediates the proteolytic cleavage of covalent DNA-protein cross-links (DPCs) during DNA synthesis, thereby playing a key role in maintaining genomic integrity. DPCs are highly toxic DNA lesions that interfere with essential chromatin transactions, such as replication and transcription, and which are induced by reactive agents, such as UV light or formaldehyde. Protects replication fork from stalling by removing DPCs, such as covalently trapped topoisomerase 1 (TOP1) adducts on DNA lesion, or poly(ADP-ribose) polymerase 1 (PARP1)-DNA complexes trapped by PARP inhibitors. Required for PCNA loading on replication sites. Promotes S-phase entry and DNA synthesis. In Mus musculus (Mouse), this protein is Serine protease FAM111A.